The chain runs to 765 residues: Nucleolar transcription factor 1 (765 aa).

M1 carries the post-translational modification N-acetylmethionine. The disordered stretch occupies residues M1 to R21. DNA-binding regions (HMG box) lie at residues P112–R180 and P196–I264. Residue T201 is modified to Phosphothreonine. Residues S273, S336, and S364 each carry the phosphoserine modification. Residues T298–L362 constitute a DNA-binding region (HMG box 3). The segment covering Q370–M379 has biased composition (basic and acidic residues). The segment at Q370–V411 is disordered. Phosphoserine occurs at positions 389, 412, 433, 435, 484, 495, 546, 584, and 638. 3 DNA-binding regions (HMG box) span residues P407–R475, P482–R549, and K568–V634. The tract at residues Y456–R487 is disordered. Residues K457–R487 are compositionally biased toward basic and acidic residues. The segment at S546–Q576 is disordered. The segment at I649 to N765 is disordered. The span at P664–K674 shows a compositional bias: polar residues. A compositionally biased stretch (acidic residues) spans S677–S746. Over residues E747 to N765 the composition is skewed to low complexity.

As to quaternary structure, homodimer. Part of Pol I pre-initiation complex (PIC), in which Pol I core assembles with RRN3 and promoter-bound UTBF and SL1/TIF-IB complex. Interacts with TOP2A in the context of Pol I complex. Interacts with TBP. Interacts with TAF1A. Interacts with RASL11A. Binds to IRS1 and PIK3CA. Interacts with DHX33. Interacts with PHF6. Interacts with CEBPA (isoform 1 and isoform 4). Interacts with DDX11. Interacts with NOP53. Interacts with ALKBH2. In terms of processing, phosphorylated and activated by PIK3CA.

It localises to the nucleus. Its subcellular location is the nucleolus. Functionally, recognizes the ribosomal RNA gene promoter and activates transcription mediated by RNA polymerase I through cooperative interactions with the transcription factor SL1/TIF-IB complex. It binds specifically to the upstream control element. The chain is Nucleolar transcription factor 1 (Ubtf) from Mus musculus (Mouse).